Reading from the N-terminus, the 108-residue chain is Large ribosomal subunit protein eL33A (108 aa).

This sequence belongs to the eukaryotic ribosomal protein eL33 family. In terms of assembly, component of the large ribosomal subunit (LSU). Mature yeast ribosomes consist of a small (40S) and a large (60S) subunit. The 40S small subunit contains 1 molecule of ribosomal RNA (18S rRNA) and at least 33 different proteins. The large 60S subunit contains 3 rRNA molecules (25S, 5.8S and 5S rRNA) and at least 46 different proteins.

The protein resides in the cytoplasm. It is found in the nucleus. Its subcellular location is the nucleolus. In terms of biological role, component of the ribosome, a large ribonucleoprotein complex responsible for the synthesis of proteins in the cell. The small ribosomal subunit (SSU) binds messenger RNAs (mRNAs) and translates the encoded message by selecting cognate aminoacyl-transfer RNA (tRNA) molecules. The large subunit (LSU) contains the ribosomal catalytic site termed the peptidyl transferase center (PTC), which catalyzes the formation of peptide bonds, thereby polymerizing the amino acids delivered by tRNAs into a polypeptide chain. The nascent polypeptides leave the ribosome through a tunnel in the LSU and interact with protein factors that function in enzymatic processing, targeting, and the membrane insertion of nascent chains at the exit of the ribosomal tunnel. This is Large ribosomal subunit protein eL33A (rpl35b) from Schizosaccharomyces pombe (strain 972 / ATCC 24843) (Fission yeast).